The chain runs to 283 residues: Elongation factor Ts (283 aa).

An involved in Mg(2+) ion dislocation from EF-Tu region spans residues 80 to 83 (TDFV).

Belongs to the EF-Ts family.

It localises to the cytoplasm. Functionally, associates with the EF-Tu.GDP complex and induces the exchange of GDP to GTP. It remains bound to the aminoacyl-tRNA.EF-Tu.GTP complex up to the GTP hydrolysis stage on the ribosome. The chain is Elongation factor Ts from Serratia proteamaculans (strain 568).